Here is a 277-residue protein sequence, read N- to C-terminus: Phosphoenolpyruvate synthase regulatory protein (277 aa).

157–164 is a binding site for ADP; that stretch reads GVSRCGKT.

The protein belongs to the pyruvate, phosphate/water dikinase regulatory protein family. PSRP subfamily.

It carries out the reaction [pyruvate, water dikinase] + ADP = [pyruvate, water dikinase]-phosphate + AMP + H(+). The enzyme catalyses [pyruvate, water dikinase]-phosphate + phosphate + H(+) = [pyruvate, water dikinase] + diphosphate. Functionally, bifunctional serine/threonine kinase and phosphorylase involved in the regulation of the phosphoenolpyruvate synthase (PEPS) by catalyzing its phosphorylation/dephosphorylation. The sequence is that of Phosphoenolpyruvate synthase regulatory protein from Escherichia coli O17:K52:H18 (strain UMN026 / ExPEC).